A 338-amino-acid chain; its full sequence is MTTVQEAVPNLIPTQDATPRPAPKKVEAGVKLRGADKVARIPVKIIPTDELPKKPDWIRVRIPVSPEVDRIKQLLRKHKLHSVCEEASCPNLGECFSGGTATFMIMGDICTRRCPFCDVGHGRPKPLDVDEPKNLAVAIADLRLKYVVITSVDRDDLRDGGAQHFADCIREIRALSPGVQLETLVPDYRGRMDVALEITAQEPPDVFNHNLETVPRLYKAARPGSDYDWSLDLLQKFKQMVPHVPTKSGLMLGLGETDEEVIEVMHRMREHDIDMLTLGQYLQPSRSHLPVQRFVHPDTFAWFAEEGYKMGFKNVASGPLVRSSYHADQQAHEAKIKL.

A disordered region spans residues Met1–Lys24. The [4Fe-4S] cluster site is built by Cys84, Cys89, Cys95, Cys110, Cys114, Cys117, and Ser324. The region spanning Phe96–Lys313 is the Radical SAM core domain.

This sequence belongs to the radical SAM superfamily. Lipoyl synthase family. [4Fe-4S] cluster is required as a cofactor.

The protein resides in the cytoplasm. It carries out the reaction [[Fe-S] cluster scaffold protein carrying a second [4Fe-4S](2+) cluster] + N(6)-octanoyl-L-lysyl-[protein] + 2 oxidized [2Fe-2S]-[ferredoxin] + 2 S-adenosyl-L-methionine + 4 H(+) = [[Fe-S] cluster scaffold protein] + N(6)-[(R)-dihydrolipoyl]-L-lysyl-[protein] + 4 Fe(3+) + 2 hydrogen sulfide + 2 5'-deoxyadenosine + 2 L-methionine + 2 reduced [2Fe-2S]-[ferredoxin]. Its pathway is protein modification; protein lipoylation via endogenous pathway; protein N(6)-(lipoyl)lysine from octanoyl-[acyl-carrier-protein]: step 2/2. Functionally, catalyzes the radical-mediated insertion of two sulfur atoms into the C-6 and C-8 positions of the octanoyl moiety bound to the lipoyl domains of lipoate-dependent enzymes, thereby converting the octanoylated domains into lipoylated derivatives. This Pseudomonas putida (strain W619) protein is Lipoyl synthase.